The chain runs to 651 residues: Probable potassium transport system protein Kup (651 aa).

12 helical membrane passes run 41 to 61, 82 to 102, 130 to 150, 163 to 183, 194 to 214, 235 to 255, 276 to 296, 309 to 329, 366 to 386, 395 to 415, 426 to 446, and 450 to 470; these read LVLG…IYAF, VVSL…VLFV, LILG…VITP, IVAP…LVTL, VAIV…ASGL, FLTV…LAMT, WLWI…AFIL, MIPS…TVIA, IYIP…VLGF, AYGI…YIVM, ALPI…ANII, and EGGW…WTWV.

This sequence belongs to the HAK/KUP transporter (TC 2.A.72) family.

It is found in the cell inner membrane. It carries out the reaction K(+)(in) + H(+)(in) = K(+)(out) + H(+)(out). Functionally, transport of potassium into the cell. Likely operates as a K(+):H(+) symporter. This is Probable potassium transport system protein Kup from Brucella suis (strain ATCC 23445 / NCTC 10510).